The primary structure comprises 72 residues: Putative sodium channel toxin Ts18 (72 aa).

Positions 1–21 are cleaved as a signal peptide; sequence MNFRFPFLLMITISLIGAVLT. Cystine bridges form between C38/C61, C47/C66, and C51/C68.

Belongs to the long (3 C-C) scorpion toxin superfamily. Expressed by the venom gland.

The protein resides in the secreted. Functionally, binds to sodium channels (Nav) and affects the channel activation process. The polypeptide is Putative sodium channel toxin Ts18 (Tityus serrulatus (Brazilian scorpion)).